The primary structure comprises 498 residues: Lysine--tRNA ligase (498 aa).

The Mg(2+) site is built by Glu408 and Glu415.

Belongs to the class-II aminoacyl-tRNA synthetase family. In terms of assembly, homodimer. The cofactor is Mg(2+).

It localises to the cytoplasm. It catalyses the reaction tRNA(Lys) + L-lysine + ATP = L-lysyl-tRNA(Lys) + AMP + diphosphate. In Listeria welshimeri serovar 6b (strain ATCC 35897 / DSM 20650 / CCUG 15529 / CIP 8149 / NCTC 11857 / SLCC 5334 / V8), this protein is Lysine--tRNA ligase.